The primary structure comprises 222 residues: Phosphoenolpyruvate guanylyltransferase (222 aa).

Phosphoenolpyruvate is bound by residues Thr-147, Gly-163, and Ser-166.

The protein belongs to the CofC family.

The catalysed reaction is phosphoenolpyruvate + GTP + H(+) = enolpyruvoyl-2-diphospho-5'-guanosine + diphosphate. Its pathway is cofactor biosynthesis; coenzyme F420 biosynthesis. Guanylyltransferase that catalyzes the activation of phosphoenolpyruvate (PEP) as enolpyruvoyl-2-diphospho-5'-guanosine, via the condensation of PEP with GTP. It is involved in the biosynthesis of coenzyme F420, a hydride carrier cofactor. The protein is Phosphoenolpyruvate guanylyltransferase of Streptosporangium roseum (strain ATCC 12428 / DSM 43021 / JCM 3005 / KCTC 9067 / NCIMB 10171 / NRRL 2505 / NI 9100).